The sequence spans 206 residues: Small ribosomal subunit protein uS4 (206 aa).

Positions 96–159 (TRLDNVVYRM…KKQARISASL (64 aa)) constitute an S4 RNA-binding domain.

It belongs to the universal ribosomal protein uS4 family. In terms of assembly, part of the 30S ribosomal subunit. Contacts protein S5. The interaction surface between S4 and S5 is involved in control of translational fidelity.

In terms of biological role, one of the primary rRNA binding proteins, it binds directly to 16S rRNA where it nucleates assembly of the body of the 30S subunit. Functionally, with S5 and S12 plays an important role in translational accuracy. This Shewanella violacea protein is Small ribosomal subunit protein uS4.